The sequence spans 87 residues: Small ribosomal subunit protein uS15c (87 aa).

The segment at 1 to 20 is disordered; that stretch reads MNQNLSIRKRNKLKQDSGSP.

The protein belongs to the universal ribosomal protein uS15 family. Part of the 30S ribosomal subunit.

The protein resides in the plastid. It localises to the chloroplast. The polypeptide is Small ribosomal subunit protein uS15c (rps15) (Zygnema circumcarinatum (Green alga)).